We begin with the raw amino-acid sequence, 554 residues long: Estrogen receptor beta (554 aa).

A modulating region spans residues 25–173 (TEIKNSPAGV…NPGSKKDAHF (149 aa)). 2 NR C4-type zinc fingers span residues 174 to 194 (CAVC…CEGC) and 210 to 234 (CPAT…LRKC). Positions 174–239 (CAVCSDYASG…RLRKCYEVGM (66 aa)) form a DNA-binding region, nuclear receptor. Residues 289-521 (SPEQFVLTLL…DLLLEMLNAH (233 aa)) enclose the NR LBD domain. Residues 529-554 (PLATHPEFGPLEQMEPGESLRKGEPQ) form a disordered region.

It belongs to the nuclear hormone receptor family. NR3 subfamily. As to quaternary structure, binds DNA as a homodimer. Can form a heterodimer with ER-alpha. Brain, pituitary, skeletal muscle, liver, adrenal, kidney, intestine and ovary.

The protein localises to the nucleus. Functionally, binds estrogens with an affinity similar to that of ER-alpha, and activates expression of reporter genes containing estrogen response elements (ERE) in an estrogen-dependent manner. Locally synthesized estrogens may act via ER beta, in addition to ER alpha, to mediate seasonal or developmental effects on nearby song nuclei. This is Estrogen receptor beta (ESR2) from Sturnus vulgaris (Starling).